Reading from the N-terminus, the 388-residue chain is MNLHEYQAKQLFAEFGLPVPEGYACDTPQEAFEAAGRISTAKKVVKCQVHAGGRGKAGGVELHDTKEGVKEFAQKWLGKNLVTYQTDANGQPVTKILVEEASNIANELYLGAVVDRASRKIVFMASTEGGVEIEKVAEETPELIHKAAIDPLVGPQAYQGRELAFKLGLEGDQIKQFVKIFMGLGTMFSQYDLALLEINPLVITAEGNLLCLDGKINIDSNALYRQPKLREMHDPSQEDEREAHAAQWELNYVALDGNVGCMVNGAGLAMGTMDIVNLHGGKPANFLDVGGGATKERVAEAFKIILSDDNVKAVLVNIFGGIVRCDMIAEGIIGAVKEVGVSVPVVVRLEGTNADLGREVLANSDVDIIAAESLTDAAQKVVAAAEAK.

An ATP-grasp domain is found at 9–244; the sequence is KQLFAEFGLP…PSQEDEREAH (236 aa). ATP is bound by residues Lys-46, 53 to 55, Glu-99, Ser-102, and Glu-107; that span reads GRG. Asn-199 and Asp-213 together coordinate Mg(2+). Substrate-binding positions include Asn-264 and 321–323; that span reads GIV.

The protein belongs to the succinate/malate CoA ligase beta subunit family. In terms of assembly, heterotetramer of two alpha and two beta subunits. It depends on Mg(2+) as a cofactor.

It catalyses the reaction succinate + ATP + CoA = succinyl-CoA + ADP + phosphate. It carries out the reaction GTP + succinate + CoA = succinyl-CoA + GDP + phosphate. It functions in the pathway carbohydrate metabolism; tricarboxylic acid cycle; succinate from succinyl-CoA (ligase route): step 1/1. In terms of biological role, succinyl-CoA synthetase functions in the citric acid cycle (TCA), coupling the hydrolysis of succinyl-CoA to the synthesis of either ATP or GTP and thus represents the only step of substrate-level phosphorylation in the TCA. The beta subunit provides nucleotide specificity of the enzyme and binds the substrate succinate, while the binding sites for coenzyme A and phosphate are found in the alpha subunit. In Vibrio parahaemolyticus serotype O3:K6 (strain RIMD 2210633), this protein is Succinate--CoA ligase [ADP-forming] subunit beta.